The following is a 936-amino-acid chain: Protein NNF2 (936 aa).

Residues 1–41 (MEEQFTNQKKVSHLQSLMNTKRSEQPTEFAKKHRFKDTLAL) lie on the Lumenal side of the membrane. Lys-10 participates in a covalent cross-link: Glycyl lysine isopeptide (Lys-Gly) (interchain with G-Cter in ubiquitin). Residues 42-62 (FLVFLSFNHFTSLCLLVSFIV) traverse the membrane as a helical segment. Residues 63-120 (ATKCKDFLANCFIILFLSKKPSRHIGEVAHIDISTSKVTNGSSNRKSNSRFFGNSKNS) are Cytoplasmic-facing. A helical transmembrane segment spans residues 121–141 (FVIPIPVLICEILFAMLLKIY). The Lumenal portion of the chain corresponds to 142 to 245 (GGDYFVKPIK…FKMLGKHSDS (104 aa)). A helical transmembrane segment spans residues 246–266 (MIYYLSFHILFFSFASSLLHP). At 267–936 (HRQTAENKPL…NIHSLIGNSY (670 aa)) the chain is on the cytoplasmic side. Disordered stretches follow at residues 297 to 351 (RISS…SNIL), 387 to 437 (GSNS…DFFS), and 512 to 533 (TSEN…QEKH). Low complexity predominate over residues 299-308 (SSSSSVSADS). Positions 325 to 351 (LSSSNQTIHPSQQNNSPVPLSSHSNIL) are enriched in polar residues. Low complexity-rich tracts occupy residues 394-405 (TTTTSTTTSPTT) and 414-428 (SLSN…SNGN). Residues 512-529 (TSENSLTPTNSNTSYVSN) show a composition bias toward polar residues.

It localises to the endoplasmic reticulum membrane. The protein is Protein NNF2 (NNF2) of Saccharomyces cerevisiae (strain ATCC 204508 / S288c) (Baker's yeast).